A 186-amino-acid chain; its full sequence is Probable chorismate pyruvate-lyase (186 aa).

The substrate site is built by R77, L115, and E174.

This sequence belongs to the UbiC family.

It is found in the cytoplasm. It catalyses the reaction chorismate = 4-hydroxybenzoate + pyruvate. It participates in cofactor biosynthesis; ubiquinone biosynthesis. In terms of biological role, removes the pyruvyl group from chorismate, with concomitant aromatization of the ring, to provide 4-hydroxybenzoate (4HB) for the ubiquinone pathway. The protein is Probable chorismate pyruvate-lyase of Shewanella sp. (strain W3-18-1).